The sequence spans 54 residues: Apelin receptor early endogenous ligand (54 aa).

The first 23 residues, 1-23 (MRFQPLFWVFFIFAMSLLFISEQ), serve as a signal peptide directing secretion.

The protein belongs to the Elabela/Toddler family. As to quaternary structure, interacts with APLNR. As to expression, expressed in the placenta. Expressed in syncytiotrophoblasts of the placenta labyrinth at 10.5 dpc. Expressed in placental chorionic trophoblasts (at protein level). Expressed in a small population of epiblast cells in the distal half of the embryo at 7 dpc. Expressed in newly formed definitive endoderm cells in the proximal half of the embryo, while it is not present in extra-embryonic endoderm at 7.5 dpc. This expression pattern then changes to the ventral aspect of the developing foregut pocket and the entire hindgut pocket at 8.5 dpc, before becoming restricted to the foregut overlying the heart and the posterior-most hindgut. Not detected in endothelial precursor cells of the yolk sac at 8 dpc. Expressed in extraembryonic tissues as well as in the chorion at 8.25 dpc. Expressed in endometrial stroma of the uterus of pregnant mice at 8.5 dpc. Expressed in the developing heart, caudal neural tube and trophobasts at 9 dpc. Expressed in the chorionic plate of the chorioallantoic placenta at 9 dpc. Expressed in the posterior half of the ventral neural tube at 9.25 dpc. Expressed in trophoblast cells at the periphery of the placenta at 9.5 dpc. Expressed in collecting ducts of the kidney of pregnant mice at 10.5 dpc. Expressed in the epicardium of the developing heart at 11.5 dpc. Expressed weakly in the adult heart. Expressed in endothelial cells and fibroblasts and weakly in cardiomyocytes.

Its subcellular location is the secreted. The protein resides in the extracellular space. Functionally, peptide hormone that functions as endogenous ligand for the G-protein-coupled apelin receptor (APLNR/APJ), that plays a role in the regulation of normal cardiovascular function and fluid homeostasis. Functions as a balanced agonist activating both G(i) protein pathway and beta-arrestin pathway of APLNR. Downstream G proteins activation, apelin can inhibit cAMP production and activate key intracellular effectors such as ERKs. On the other hand, APLNR activation induces beta-arrestin recruitment to the membrane leading to desensitization and internalization of the receptor. Required for mesendodermal differentiation, blood vessels formation and heart morphogenesis during early development and for adult cardiovascular homeostasis. Acts as a motogen by promoting mesendodermal cell migration during gastrulation by binding and activating APLNR. Acts as an early embryonic regulator of cellular movement with a role in migration and development of cardiac progenitor cells. May act as a chemoattractant for the activation of angioblast migration toward the embryonic midline, i.e. the position of the future vessel formation, during vasculogenesis. Positively regulates sinus venosus (SV)-derived endothelial cells migration into the developing heart to promote coronary blood vessel sprouting. Plays a role in placental vascular development; promotes placental trophoblast invasion and spiral artery remodeling in the uterus. Involved in the regulation of maternal cardiovascular homeostasis to prevent gestational hypertension and for potent cardioprotective functions during heart failure. Mediates myocardial contractility in an ERK1/2-dependent manner. The protein is Apelin receptor early endogenous ligand of Mus musculus (Mouse).